A 376-amino-acid polypeptide reads, in one-letter code: Ribonucleoside-diphosphate reductase subunit beta (376 aa).

Fe cation-binding residues include Asp85, Glu116, and His119. Tyr123 is a catalytic residue. Positions 205, 239, and 242 each coordinate Fe cation.

The protein belongs to the ribonucleoside diphosphate reductase small chain family. As to quaternary structure, tetramer of two alpha and two beta subunits. It depends on Fe cation as a cofactor.

The enzyme catalyses a 2'-deoxyribonucleoside 5'-diphosphate + [thioredoxin]-disulfide + H2O = a ribonucleoside 5'-diphosphate + [thioredoxin]-dithiol. Functionally, provides the precursors necessary for DNA synthesis. Catalyzes the biosynthesis of deoxyribonucleotides from the corresponding ribonucleotides. This chain is Ribonucleoside-diphosphate reductase subunit beta (nrdB), found in Buchnera aphidicola subsp. Schizaphis graminum (strain Sg).